Reading from the N-terminus, the 369-residue chain is Actin-related protein T3 (369 aa).

This sequence belongs to the actin family. As to quaternary structure, interacts with PFN3. As to expression, testis specific (at protein level). Expressed specifically in haploid germ cells.

The protein localises to the cytoplasm. It is found in the cytoskeleton. It localises to the nucleus. In Mus musculus (Mouse), this protein is Actin-related protein T3 (Actrt3).